We begin with the raw amino-acid sequence, 550 residues long: ATP-dependent RNA helicase dbp2 (550 aa).

The disordered stretch occupies residues 1 to 25 (MSYRDNEYSGNYNGKEDGYNSRGRY). Positions 122 to 150 (TTFEEAGFPNYVLKEVKQLGFEAPTPIQQ) match the Q motif motif. Positions 153 to 328 (WPMAMSGRDM…RDYLNDYIQV (176 aa)) constitute a Helicase ATP-binding domain. 166 to 173 (SATGSGKT) provides a ligand contact to ATP. Residues 276–279 (DEAD) carry the DEAD box motif. The Helicase C-terminal domain occupies 340–503 (NIKQIVEVVD…DIDPKLEEMA (164 aa)). An RNA-binding RGG-box region spans residues 510 to 533 (RGGNYRRGGYGRGGFRRGGGYGNR). The disordered stretch occupies residues 525–550 (RRGGGYGNRNRGFTGSNSAPLARSRW).

The protein belongs to the DEAD box helicase family. DDX5/DBP2 subfamily. In terms of assembly, associates with polysomes.

The protein localises to the cytoplasm. It is found in the nucleus. The enzyme catalyses ATP + H2O = ADP + phosphate + H(+). ATP-dependent RNA helicase involved nonsense-mediated mRNA decay and ribosome biogenesis through rRNA processing. In Schizosaccharomyces pombe (strain 972 / ATCC 24843) (Fission yeast), this protein is ATP-dependent RNA helicase dbp2 (dbp2).